The sequence spans 323 residues: MNSKIQKMELNDGHSIPVLGFGTYATEENLRKKSMESTKIAIDVGFRHIDCSHLYQNEEEIGQAIVSKIEDGTVKREDIFYTSKLWSTSHRPELVRPSLENSLRKLNLDYVDLYLIHFPVSLKPGDELLPQDEHGNLILDTVDLCDTWEAMEKCKDAGLAKSIGVSNFNRRQLEKILNKPGLKHRPVCNQVECHLYLNQSKLLAYCKMNDIVLVAYGALGTQRYKYCINEDTPVLLDDPILCTMAKKYKRTPALIALRYQLERGIVTLVKSFNEERIRENLQVFDFQLASDDMEILDNLDRNLRYFPANMFKAHPNFPFSDEY.

Residues 20–24 and Asp50 contribute to the NADP(+) site; that span reads GFGTY. The active-site Proton donor is Tyr55. A substrate-binding site is contributed by His117. NADP(+) contacts are provided by residues 166–167, Gln190, 216–221, and 270–280; these read SN, YGALGT, and KSFNEERIREN.

It belongs to the aldo/keto reductase family. As to quaternary structure, monomer. Post-translationally, the N-terminus is blocked. Corpus luteum (large luteal cells).

The protein resides in the cytoplasm. It catalyses the reaction (17R,20S)-17,20-dihydroxypregn-4-en-3-one + NADP(+) = 17alpha-hydroxyprogesterone + NADPH + H(+). It carries out the reaction (17R,20S)-17,20-dihydroxypregn-4-en-3-one + NAD(+) = 17alpha-hydroxyprogesterone + NADH + H(+). Catalyzes the conversion of progesterone into 20-alpha-dihydroprogesterone (20 alpha-OHP). The sequence is that of Aldo-keto reductase family 1 member C18 (Akr1c18) from Rattus norvegicus (Rat).